The chain runs to 420 residues: ATP phosphoribosyltransferase regulatory subunit (420 aa).

It belongs to the class-II aminoacyl-tRNA synthetase family. HisZ subfamily. In terms of assembly, heteromultimer composed of HisG and HisZ subunits.

Its subcellular location is the cytoplasm. Its pathway is amino-acid biosynthesis; L-histidine biosynthesis; L-histidine from 5-phospho-alpha-D-ribose 1-diphosphate: step 1/9. In terms of biological role, required for the first step of histidine biosynthesis. May allow the feedback regulation of ATP phosphoribosyltransferase activity by histidine. The protein is ATP phosphoribosyltransferase regulatory subunit of Bacillus thuringiensis (strain Al Hakam).